The sequence spans 281 residues: 39kDa core protein OPG130 (281 aa).

Positions 1–22 are enriched in polar residues; it reads MDFFNKFSQGLAESSTPKSSIY. Disordered regions lie at residues 1–33, 91–112, and 149–192; these read MDFFNKFSQGLAESSTPKSSIYYSEEKDPDTKK, ILLPSSTAPTPKPRQQTNTSSD, and NKDQ…PQPP. A compositionally biased stretch (basic and acidic residues) spans 24-33; the sequence is SEEKDPDTKK. The span at 94 to 112 shows a compositional bias: polar residues; it reads PSSTAPTPKPRQQTNTSSD. Over residues 154–175 the composition is skewed to low complexity; sequence TTTPPSTQPSQTLPTTTCTQQS.

The protein belongs to the orthopoxvirus OPG130 family. As to quaternary structure, interacts with OPG136 and its cleaved form. In terms of processing, its phosphorylation state is regulated by the OPG054 kinase and the OPG106 phosphatase.

The protein resides in the virion. The protein localises to the host endoplasmic reticulum-Golgi intermediate compartment membrane. Component of the virion core. Participates in virion assembly. This is 39kDa core protein OPG130 (OPG130) from Vaccinia virus (strain Copenhagen) (VACV).